A 282-amino-acid chain; its full sequence is 1,4-dihydroxy-6-naphtoate synthase (282 aa).

Residues 57–59 and 109–110 contribute to the substrate site; these read KVS and TA. The active-site Proton acceptor is H153.

It belongs to the MqnA/MqnD family. MqnD subfamily.

It carries out the reaction cyclic dehypoxanthinylfutalosinate = 1,4-dihydroxy-6-naphthoate + dihydroxyacetone. It participates in quinol/quinone metabolism; menaquinone biosynthesis. In terms of biological role, catalyzes the conversion of cyclic dehypoxanthine futalosine (cyclic DHFL) into 1,4-dihydroxy-6-naphthoate, a step in the biosynthesis of menaquinone (MK, vitamin K2). In Streptomyces coelicolor (strain ATCC BAA-471 / A3(2) / M145), this protein is 1,4-dihydroxy-6-naphtoate synthase.